The primary structure comprises 178 residues: Ribosome maturation factor RimM (178 aa).

The PRC barrel domain maps to 100-178 (DEGEFYWHQL…EIRVDWDADF (79 aa)).

It belongs to the RimM family. Binds ribosomal protein uS19.

It is found in the cytoplasm. Functionally, an accessory protein needed during the final step in the assembly of 30S ribosomal subunit, possibly for assembly of the head region. Essential for efficient processing of 16S rRNA. May be needed both before and after RbfA during the maturation of 16S rRNA. It has affinity for free ribosomal 30S subunits but not for 70S ribosomes. The sequence is that of Ribosome maturation factor RimM from Azotobacter vinelandii (strain DJ / ATCC BAA-1303).